Here is a 106-residue protein sequence, read N- to C-terminus: Iron-sulfur cluster assembly protein CyaY (106 aa).

Belongs to the frataxin family.

Functionally, involved in iron-sulfur (Fe-S) cluster assembly. May act as a regulator of Fe-S biogenesis. In Escherichia coli O139:H28 (strain E24377A / ETEC), this protein is Iron-sulfur cluster assembly protein CyaY.